A 171-amino-acid polypeptide reads, in one-letter code: Siroheme decarboxylase NirH subunit (171 aa).

It belongs to the Ahb/Nir family. In terms of assembly, probably forms a complex composed of NirD, NirL, NirG and NirH. All proteins are required for the total conversion of siroheme to didecarboxysiroheme.

It carries out the reaction siroheme + 2 H(+) = 12,18-didecarboxysiroheme + 2 CO2. It functions in the pathway porphyrin-containing compound metabolism. Its function is as follows. Involved in heme d1 biosynthesis. Catalyzes the decarboxylation of siroheme into didecarboxysiroheme. In Pseudomonas aeruginosa (strain ATCC 15692 / DSM 22644 / CIP 104116 / JCM 14847 / LMG 12228 / 1C / PRS 101 / PAO1), this protein is Siroheme decarboxylase NirH subunit.